Here is a 595-residue protein sequence, read N- to C-terminus: ATP-dependent RNA helicase DBP9 (595 aa).

The short motif at 14–42 is the Q motif element; the sequence is VNFESFKLDARLLQAIKGSGFTHPTLIQS. One can recognise a Helicase ATP-binding domain in the interval 46-230; the sequence is PLALEEKRDI…QKYCRSPAII (185 aa). 59–66 contributes to the ATP binding site; the sequence is AATGSGKT. Residues 176–179 carry the DEAD box motif; the sequence is DEVD. In terms of domain architecture, Helicase C-terminal spans 243 to 477; it reads KLVQYYVRVG…PYSFDLKQVE (235 aa). 2 disordered regions span residues 349–371 and 560–595; these read KNDE…IKSK and KISF…LKKF. A compositionally biased stretch (polar residues) spans 353-371; sequence TNTVVAEESTNSTTGIKSK. A compositionally biased stretch (basic residues) spans 568 to 586; that stretch reads KPNKVGKKSKNSKNKKRKG.

This sequence belongs to the DEAD box helicase family. DDX56/DBP9 subfamily.

It localises to the nucleus. The protein resides in the nucleolus. The catalysed reaction is ATP + H2O = ADP + phosphate + H(+). Functionally, ATP-binding RNA helicase involved in the biogenesis of 60S ribosomal subunits and is required for the normal formation of 25S and 5.8S rRNAs. The sequence is that of ATP-dependent RNA helicase DBP9 (DBP9) from Candida glabrata (strain ATCC 2001 / BCRC 20586 / JCM 3761 / NBRC 0622 / NRRL Y-65 / CBS 138) (Yeast).